The following is a 291-amino-acid chain: Methionine aminopeptidase (291 aa).

Residue His65 participates in substrate binding. A divalent metal cation contacts are provided by Asp85, Asp96, and His155. His163 serves as a coordination point for substrate. Residues Glu188 and Glu276 each coordinate a divalent metal cation.

It belongs to the peptidase M24A family. Methionine aminopeptidase archaeal type 2 subfamily. As to quaternary structure, monomer. It depends on Co(2+) as a cofactor. The cofactor is Zn(2+). Mn(2+) serves as cofactor. Requires Fe(2+) as cofactor.

It carries out the reaction Release of N-terminal amino acids, preferentially methionine, from peptides and arylamides.. Functionally, removes the N-terminal methionine from nascent proteins. The N-terminal methionine is often cleaved when the second residue in the primary sequence is small and uncharged (Met-Ala-, Cys, Gly, Pro, Ser, Thr, or Val). This Archaeoglobus fulgidus (strain ATCC 49558 / DSM 4304 / JCM 9628 / NBRC 100126 / VC-16) protein is Methionine aminopeptidase.